A 319-amino-acid polypeptide reads, in one-letter code: HTH-type transcriptional regulator YidZ (319 aa).

Positions 8-65 (LDLNLLLCLQLLMQERSVTKAAKRMNVTPSAVSKSLAKLRAWFDDPLFVNSPLGLSPT) constitute an HTH lysR-type domain. Positions 25–44 (VTKAAKRMNVTPSAVSKSLA) form a DNA-binding region, H-T-H motif.

It belongs to the LysR transcriptional regulatory family.

Its function is as follows. Involved in anaerobic NO protection. The sequence is that of HTH-type transcriptional regulator YidZ from Escherichia coli O17:K52:H18 (strain UMN026 / ExPEC).